Consider the following 211-residue polypeptide: Protein-L-isoaspartate O-methyltransferase (211 aa).

Serine 62 is a catalytic residue.

This sequence belongs to the methyltransferase superfamily. L-isoaspartyl/D-aspartyl protein methyltransferase family.

The protein resides in the cytoplasm. The enzyme catalyses [protein]-L-isoaspartate + S-adenosyl-L-methionine = [protein]-L-isoaspartate alpha-methyl ester + S-adenosyl-L-homocysteine. In terms of biological role, catalyzes the methyl esterification of L-isoaspartyl residues in peptides and proteins that result from spontaneous decomposition of normal L-aspartyl and L-asparaginyl residues. It plays a role in the repair and/or degradation of damaged proteins. This chain is Protein-L-isoaspartate O-methyltransferase, found in Shewanella woodyi (strain ATCC 51908 / MS32).